A 315-amino-acid chain; its full sequence is DNA-directed RNA polymerase subunit alpha (315 aa).

The alpha N-terminal domain (alpha-NTD) stretch occupies residues 1 to 227; that stretch reads MTQFQIECVE…NLFNPFKKIN (227 aa). The interval 239–315 is alpha C-terminal domain (alpha-CTD); that stretch reads EDKISQIPIE…PKRKTNKKEN (77 aa).

The protein belongs to the RNA polymerase alpha chain family. In terms of assembly, in plastids the minimal PEP RNA polymerase catalytic core is composed of four subunits: alpha, beta, beta', and beta''. When a (nuclear-encoded) sigma factor is associated with the core the holoenzyme is formed, which can initiate transcription.

It localises to the plastid. Its subcellular location is the cyanelle. The catalysed reaction is RNA(n) + a ribonucleoside 5'-triphosphate = RNA(n+1) + diphosphate. Functionally, DNA-dependent RNA polymerase catalyzes the transcription of DNA into RNA using the four ribonucleoside triphosphates as substrates. The protein is DNA-directed RNA polymerase subunit alpha of Cyanophora paradoxa.